We begin with the raw amino-acid sequence, 238 residues long: Ureidoacrylate amidohydrolase RutB (238 aa).

The Proton acceptor role is filled by D35. K144 is a catalytic residue. C177 (nucleophile) is an active-site residue.

It belongs to the isochorismatase family. RutB subfamily.

It catalyses the reaction (Z)-3-ureidoacrylate + H2O + H(+) = (Z)-3-aminoacrylate + NH4(+) + CO2. The catalysed reaction is (Z)-3-ureidoacrylate + H2O = (Z)-3-aminoacrylate + carbamate + H(+). It carries out the reaction (Z)-2-methylureidoacrylate + H2O + H(+) = (Z)-2-methylaminoacrylate + NH4(+) + CO2. Its function is as follows. Hydrolyzes ureidoacrylate to form aminoacrylate and carbamate. The carbamate hydrolyzes spontaneously, thereby releasing one of the nitrogen atoms of the pyrimidine ring as ammonia and one of its carbon atoms as CO2. This Caulobacter vibrioides (strain NA1000 / CB15N) (Caulobacter crescentus) protein is Ureidoacrylate amidohydrolase RutB.